The chain runs to 562 residues: Nicotinate phosphoribosyltransferase (562 aa).

Positions 36, 183, and 225 each coordinate nicotinate. At histidine 228 the chain carries Phosphohistidine. Threonine 397 lines the 5-phospho-alpha-D-ribose 1-diphosphate pocket.

This sequence belongs to the NAPRTase family. The cofactor is Mg(2+). Mn(2+) is required as a cofactor. Transiently phosphorylated on a His residue during the reaction cycle. Phosphorylation strongly increases the affinity for substrates and increases the rate of nicotinate D-ribonucleotide production. Dephosphorylation regenerates the low-affinity form of the enzyme, leading to product release.

It catalyses the reaction nicotinate + 5-phospho-alpha-D-ribose 1-diphosphate + ATP + H2O = nicotinate beta-D-ribonucleotide + ADP + phosphate + diphosphate. It participates in cofactor biosynthesis; NAD(+) biosynthesis; nicotinate D-ribonucleotide from nicotinate: step 1/1. Catalyzes the first step in the biosynthesis of NAD from nicotinic acid, the ATP-dependent synthesis of beta-nicotinate D-ribonucleotide from nicotinate and 5-phospho-D-ribose 1-phosphate. Helps prevent cellular oxidative stress via its role in NAD biosynthesis. The polypeptide is Nicotinate phosphoribosyltransferase (Caenorhabditis elegans).